Consider the following 112-residue polypeptide: MFSKSGMSDLMKHAQRMQEQMQQMQGEIAKLEVNGESGAGLVKVTINGVYHCRRVEIDSSLLQDDKDMLEDLITAAFNDAVRRITEIKKDKMTSLSSSLQMPLGFNWNMPFL.

This sequence belongs to the YbaB/EbfC family. As to quaternary structure, homodimer.

It is found in the cytoplasm. The protein resides in the nucleoid. Binds to DNA and alters its conformation. May be involved in regulation of gene expression, nucleoid organization and DNA protection. In Baumannia cicadellinicola subsp. Homalodisca coagulata, this protein is Nucleoid-associated protein BCI_0116.